The chain runs to 107 residues: Small ribosomal subunit protein uS10 (107 aa).

It belongs to the universal ribosomal protein uS10 family. As to quaternary structure, part of the 30S ribosomal subunit.

Its function is as follows. Involved in the binding of tRNA to the ribosomes. In Deinococcus deserti (strain DSM 17065 / CIP 109153 / LMG 22923 / VCD115), this protein is Small ribosomal subunit protein uS10.